A 458-amino-acid polypeptide reads, in one-letter code: Exodeoxyribonuclease 7 large subunit (458 aa).

It belongs to the XseA family. As to quaternary structure, heterooligomer composed of large and small subunits.

The protein localises to the cytoplasm. The enzyme catalyses Exonucleolytic cleavage in either 5'- to 3'- or 3'- to 5'-direction to yield nucleoside 5'-phosphates.. Its function is as follows. Bidirectionally degrades single-stranded DNA into large acid-insoluble oligonucleotides, which are then degraded further into small acid-soluble oligonucleotides. The polypeptide is Exodeoxyribonuclease 7 large subunit (Shouchella clausii (strain KSM-K16) (Alkalihalobacillus clausii)).